The chain runs to 780 residues: MTHEEHHAAKTLGIGKAIAVLTSGGDAQGMNAAVRAVVRVGIFTGARVFFVHEGYQGLVDGGDHIKEATWESVSMMLQLGGTVIGSARCKDFREREGRLRAAYNLVKRGITNLCVIGGDGSLTGADTFRSEWSDLLSDLQKAGKITDEEATKSSYLNIVGLVGSIDNDFCGTDMTIGTDSALHRIMEIVDAITTTAQSHQRTFVLEVMGRHCGYLALVTSLSCGADWVFIPECPPDDDWEEHLCRRLSETRTRGSRLNIIIVAEGAIDKNGKPITSEDIKNLVVKRLGYDTRVTVLGHVQRGGTPSAFDRILGSRMGVEAVMALLEGTPDTPACVVSLSGNQAVRLPLMECVQVTKDVTKAMDEKKFDEALKLRGRSFMNNWEVYKLLAHVRPPVSKSGSHTVAVMNVGAPAAGMNAAVRSTVRIGLIQGNRVLVVHDGFEGLAKGQIEEAGWSYVGGWTGQGGSKLGTKRTLPKKSFEQISANITKFNIQGLVIIGGFEAYTGGLELMEGRKQFDELCIPFVVIPATVSNNVPGSDFSVGADTALNTICTTCDRIKQSAAGTKRRVFIIETMGGYCGYLATMAGLAAGADAAYIFEEPFTIRDLQANVEHLVQKMKTTVKRGLVLRNEKCNENYTTDFIFNLYSEEGKGIFDSRKNVLGHMQQGGSPTPFDRNFATKMGAKAMNWMSGKIKESYRNGRIFANTPDSGCVLGMRKRALVFQPVAELKDQTDFEHRIPKEQWWLKLRPILKILAKYEIDLDTSDHAHLEHITRKRSGEAAV.

T2 carries the N-acetylthreonine modification. The tract at residues 2 to 390 (THEEHHAAKT…NWEVYKLLAH (389 aa)) is N-terminal catalytic PFK domain 1. ATP contacts are provided by residues G25, 88–89 (RC), and 118–121 (GDGS). Residue D119 coordinates Mg(2+). A Phosphoserine modification is found at S133. Substrate-binding positions include 164-166 (SID), R201, 208-210 (MGR), E264, R292, and 298-301 (HVQR). Catalysis depends on D166, which acts as the Proton acceptor. At S377 the chain carries Phosphoserine. The interdomain linker stretch occupies residues 391-401 (VRPPVSKSGSH). The interval 402 to 780 (TVAVMNVGAP…TRKRSGEAAV (379 aa)) is C-terminal regulatory PFK domain 2. Beta-D-fructose 2,6-bisphosphate contacts are provided by residues R471 and 528–532 (TVSNN). Residue S530 is glycosylated (O-linked (GlcNAc) serine). Residue K557 is modified to N6-(2-hydroxyisobutyryl)lysine. Beta-D-fructose 2,6-bisphosphate contacts are provided by residues R566, 573–575 (MGG), E629, R655, and 661–664 (HMQQ). Phosphoserine is present on S667. R735 is a beta-D-fructose 2,6-bisphosphate binding site. The residue at position 775 (S775) is a Phosphoserine.

It belongs to the phosphofructokinase type A (PFKA) family. ATP-dependent PFK group I subfamily. Eukaryotic two domain clade 'E' sub-subfamily. Homo- and heterotetramers. Phosphofructokinase (PFK) enzyme functions as a tetramer composed of different combinations of 3 types of subunits, called PFKM (where M stands for Muscle), PFKL (Liver) and PFKP (Platelet). The composition of the PFK tetramer differs according to the tissue type it is present in. In muscles, it is composed of 4 PFKM subunits (also called M4). In the liver, the predominant form is a tetramer of PFKL subunits (L4). In erythrocytes, both PFKM and PFKL subunits randomly tetramerize to form M4, L4 and other combinations (ML3, M2L2, M3L). The kinetic and regulatory properties of the tetrameric enzyme are dependent on the subunit composition, hence can vary across tissues. Interacts (via C-terminus) with HK1 (via N-terminal spermatogenic cell-specific region). The cofactor is Mg(2+). In terms of processing, glcNAcylation decreases enzyme activity.

Its subcellular location is the cytoplasm. It carries out the reaction beta-D-fructose 6-phosphate + ATP = beta-D-fructose 1,6-bisphosphate + ADP + H(+). It participates in carbohydrate degradation; glycolysis; D-glyceraldehyde 3-phosphate and glycerone phosphate from D-glucose: step 3/4. Its activity is regulated as follows. Allosterically activated by ADP, AMP, or fructose 2,6-bisphosphate, and allosterically inhibited by ATP or citrate. Its function is as follows. Catalyzes the phosphorylation of D-fructose 6-phosphate to fructose 1,6-bisphosphate by ATP, the first committing step of glycolysis. The chain is ATP-dependent 6-phosphofructokinase, muscle type (PFKM) from Homo sapiens (Human).